Consider the following 209-residue polypeptide: ATP-dependent Clp protease proteolytic subunit (209 aa).

Residue Ser106 is the Nucleophile of the active site. The active site involves His131.

Belongs to the peptidase S14 family. As to quaternary structure, fourteen ClpP subunits assemble into 2 heptameric rings which stack back to back to give a disk-like structure with a central cavity, resembling the structure of eukaryotic proteasomes.

The protein resides in the cytoplasm. It catalyses the reaction Hydrolysis of proteins to small peptides in the presence of ATP and magnesium. alpha-casein is the usual test substrate. In the absence of ATP, only oligopeptides shorter than five residues are hydrolyzed (such as succinyl-Leu-Tyr-|-NHMec, and Leu-Tyr-Leu-|-Tyr-Trp, in which cleavage of the -Tyr-|-Leu- and -Tyr-|-Trp bonds also occurs).. Functionally, cleaves peptides in various proteins in a process that requires ATP hydrolysis. Has a chymotrypsin-like activity. Plays a major role in the degradation of misfolded proteins. The chain is ATP-dependent Clp protease proteolytic subunit from Brucella canis (strain ATCC 23365 / NCTC 10854 / RM-666).